A 241-amino-acid polypeptide reads, in one-letter code: U2 small nuclear ribonucleoprotein B'' (241 aa).

The 80-residue stretch at 12-91 (QTLYVNNLYE…RPMKIQYCKS (80 aa)) folds into the RRM 1 domain. The span at 99-126 (LDGTYMEKKREREENDKKGSNKKQDRKS) shows a compositional bias: basic and acidic residues. The interval 99–169 (LDGTYMEKKR…PRDDPPNKTL (71 aa)) is disordered. Low complexity predominate over residues 129–152 (QQQQQQKRPGAPTSTTSTTSPTTS). The RRM 2 domain occupies 167 to 241 (KTLFVENLPD…KPMVVSFAAQ (75 aa)).

Belongs to the RRM U1 A/B'' family. Identified in the spliceosome B complex. Identified in the spliceosome C complex.

It is found in the nucleus. In terms of biological role, involved in pre-mRNA splicing as component of the spliceosome. Associated with sn-RNP U2, where it contributes to the binding of stem loop IV of U2 snRNA. This chain is U2 small nuclear ribonucleoprotein B'' (snrpb2), found in Dictyostelium discoideum (Social amoeba).